The chain runs to 186 residues: Lipid A palmitoyltransferase PagP (186 aa).

The first 25 residues, 1–25 (MNVSKYVAIFSFVFIQLISVGKVFA), serve as a signal peptide directing secretion. Catalysis depends on residues histidine 58, aspartate 101, and serine 102.

Belongs to the lipid A palmitoyltransferase family. As to quaternary structure, homodimer.

The protein localises to the cell outer membrane. It carries out the reaction lipid A (E. coli) + a 1-hexadecanoyl-2-acyl-sn-glycero-3-phosphocholine = hepta-acyl lipid A (E. coli) + a 2-acyl-sn-glycero-3-phosphocholine. It catalyses the reaction lipid IIA + a 1-hexadecanoyl-2-acyl-sn-glycero-3-phosphocholine = lipid IIB + a 2-acyl-sn-glycero-3-phosphocholine. The enzyme catalyses lipid IVA (E. coli) + a 1-hexadecanoyl-2-acyl-sn-glycero-3-phosphocholine = lipid IVB (E. coli) + a 2-acyl-sn-glycero-3-phosphocholine. Functionally, transfers a palmitate residue from the sn-1 position of a phospholipid to the N-linked hydroxymyristate on the proximal unit of lipid A or its precursors. The sequence is that of Lipid A palmitoyltransferase PagP from Escherichia coli O157:H7.